Here is a 449-residue protein sequence, read N- to C-terminus: Tubulin beta-7 chain (449 aa).

Residues Gln-11, Glu-69, Ser-138, Gly-142, Thr-143, Gly-144, Asn-204, and Asn-226 each coordinate GTP. A Mg(2+)-binding site is contributed by Glu-69. Residues 422-449 form a disordered region; it reads YQQYQDATADEEGEYEEEEAEYEQEETY. Residues 429 to 449 are compositionally biased toward acidic residues; it reads TADEEGEYEEEEAEYEQEETY.

Belongs to the tubulin family. As to quaternary structure, dimer of alpha and beta chains. A typical microtubule is a hollow water-filled tube with an outer diameter of 25 nm and an inner diameter of 15 nM. Alpha-beta heterodimers associate head-to-tail to form protofilaments running lengthwise along the microtubule wall with the beta-tubulin subunit facing the microtubule plus end conferring a structural polarity. Microtubules usually have 13 protofilaments but different protofilament numbers can be found in some organisms and specialized cells. Requires Mg(2+) as cofactor.

Its subcellular location is the cytoplasm. The protein localises to the cytoskeleton. Functionally, tubulin is the major constituent of microtubules, a cylinder consisting of laterally associated linear protofilaments composed of alpha- and beta-tubulin heterodimers. Microtubules grow by the addition of GTP-tubulin dimers to the microtubule end, where a stabilizing cap forms. Below the cap, tubulin dimers are in GDP-bound state, owing to GTPase activity of alpha-tubulin. This Arabidopsis thaliana (Mouse-ear cress) protein is Tubulin beta-7 chain (TUBB7).